We begin with the raw amino-acid sequence, 433 residues long: WD repeat domain phosphoinositide-interacting protein 1 (433 aa).

Positions 127-132 match the Nuclear receptor interaction motif; that stretch reads LLKTLL. WD repeat units follow at residues 136–177 and 180–220; these read RNPH…CECT and AHDS…KLYE. The short motif at 221–224 is the L/FRRG motif element; it reads FRRG. WD repeat units lie at residues 226–265 and 296–346; these read KRYV…ERSE and DRAF…GGEC.

This sequence belongs to the WD repeat PROPPIN family.

The protein resides in the golgi apparatus. The protein localises to the trans-Golgi network. It localises to the endosome. Its subcellular location is the cytoplasmic vesicle. It is found in the clathrin-coated vesicle. The protein resides in the preautophagosomal structure membrane. The protein localises to the cytoplasm. It localises to the cytoskeleton. Functionally, component of the autophagy machinery that controls the major intracellular degradation process by which cytoplasmic materials are packaged into autophagosomes and delivered to lysosomes for degradation. Plays an important role in starvation- and calcium-mediated autophagy, as well as in mitophagy. Functions downstream of the ulk1 and PI3-kinases that produce phosphatidylinositol 3-phosphate (PtdIns3P) on membranes of the endoplasmic reticulum once activated. Binds phosphatidylinositol 3-phosphate (PtdIns3P), and maybe other phosphoinositides including PtdIns3,5P2 and PtdIns5P, and is recruited to phagophore assembly sites at the endoplasmic reticulum membranes. There, it assists wipi2 in the recruitment of atg12-atg5-atg16l1, a complex that directly controls the elongation of the nascent autophagosomal membrane. Together with wdr45/wipi4, promotes atg2 (atg2a or atg2b)-mediated lipid transfer by enhancing atg2-association with phosphatidylinositol 3-monophosphate (PI3P)-containing membranes. This Xenopus laevis (African clawed frog) protein is WD repeat domain phosphoinositide-interacting protein 1 (wipi1).